Here is a 205-residue protein sequence, read N- to C-terminus: Large ribosomal subunit protein uL4 (205 aa).

The interval Ile56–Arg78 is disordered.

This sequence belongs to the universal ribosomal protein uL4 family. Part of the 50S ribosomal subunit.

In terms of biological role, one of the primary rRNA binding proteins, this protein initially binds near the 5'-end of the 23S rRNA. It is important during the early stages of 50S assembly. It makes multiple contacts with different domains of the 23S rRNA in the assembled 50S subunit and ribosome. Its function is as follows. Forms part of the polypeptide exit tunnel. The chain is Large ribosomal subunit protein uL4 from Ehrlichia canis (strain Jake).